Here is a 575-residue protein sequence, read N- to C-terminus: Sulfite reductase [NADPH] hemoprotein beta-component (575 aa).

The [4Fe-4S] cluster site is built by Cys440, Cys446, Cys485, and Cys489. Cys489 is a siroheme binding site.

Belongs to the nitrite and sulfite reductase 4Fe-4S domain family. As to quaternary structure, alpha(8)-beta(8). The alpha component is a flavoprotein, the beta component is a hemoprotein. Siroheme serves as cofactor. [4Fe-4S] cluster is required as a cofactor.

The catalysed reaction is hydrogen sulfide + 3 NADP(+) + 3 H2O = sulfite + 3 NADPH + 4 H(+). It participates in sulfur metabolism; hydrogen sulfide biosynthesis; hydrogen sulfide from sulfite (NADPH route): step 1/1. Component of the sulfite reductase complex that catalyzes the 6-electron reduction of sulfite to sulfide. This is one of several activities required for the biosynthesis of L-cysteine from sulfate. The sequence is that of Sulfite reductase [NADPH] hemoprotein beta-component from Chromohalobacter salexigens (strain ATCC BAA-138 / DSM 3043 / CIP 106854 / NCIMB 13768 / 1H11).